Reading from the N-terminus, the 389-residue chain is Allantoicase (389 aa).

It belongs to the allantoicase family.

It carries out the reaction allantoate + H2O = (S)-ureidoglycolate + urea. It participates in nitrogen metabolism; (S)-allantoin degradation; (S)-ureidoglycolate from allantoate (aminidohydrolase route): step 1/1. In terms of biological role, utilization of purines as secondary nitrogen sources, when primary sources are limiting. This is Allantoicase (allc) from Xenopus tropicalis (Western clawed frog).